Reading from the N-terminus, the 176-residue chain is Disulfide bond formation protein B (176 aa).

Over 1-14 (MLRFLNRCSRGRGA) the chain is Cytoplasmic. The chain crosses the membrane as a helical span at residues 15 to 31 (WLLLAFTALALELTALY). Residues 32-49 (FQHVMLLKPCVLCIYQRS) lie on the Periplasmic side of the membrane. A disulfide bridge links Cys41 with Cys44. Residues 50 to 65 (ALWGVFAAGIVGAIAP) traverse the membrane as a helical segment. Residues 66 to 71 (SSLLRY) are Cytoplasmic-facing. The chain crosses the membrane as a helical span at residues 72–89 (PAIALWIYSSYEGIRLAW). Residues 90–144 (KHTDILLNPSPFTTCDFFVSFPSWLPLDKWLPAIFNATGDCSERQWSFLSMEMPQ) are Periplasmic-facing. Cys104 and Cys130 form a disulfide bridge. The chain crosses the membrane as a helical span at residues 145–163 (WLLGIFAAYLLIAVLVLIA). Residues 164–176 (QPFRSKRRDLFSR) lie on the Cytoplasmic side of the membrane.

This sequence belongs to the DsbB family.

The protein resides in the cell inner membrane. In terms of biological role, required for disulfide bond formation in some periplasmic proteins. Acts by oxidizing the DsbA protein. The chain is Disulfide bond formation protein B from Pectobacterium atrosepticum (strain SCRI 1043 / ATCC BAA-672) (Erwinia carotovora subsp. atroseptica).